Consider the following 176-residue polypeptide: NAD(P)H-quinone oxidoreductase subunit J (176 aa).

Over residues 1–10 the composition is skewed to polar residues; it reads MSETPTSPNQ. The tract at residues 1-22 is disordered; sequence MSETPTSPNQDLPEAPQAGPLS.

Belongs to the complex I 30 kDa subunit family. In terms of assembly, NDH-1 can be composed of about 15 different subunits; different subcomplexes with different compositions have been identified which probably have different functions.

The protein resides in the cellular thylakoid membrane. It catalyses the reaction a plastoquinone + NADH + (n+1) H(+)(in) = a plastoquinol + NAD(+) + n H(+)(out). The catalysed reaction is a plastoquinone + NADPH + (n+1) H(+)(in) = a plastoquinol + NADP(+) + n H(+)(out). Functionally, NDH-1 shuttles electrons from an unknown electron donor, via FMN and iron-sulfur (Fe-S) centers, to quinones in the respiratory and/or the photosynthetic chain. The immediate electron acceptor for the enzyme in this species is believed to be plastoquinone. Couples the redox reaction to proton translocation, and thus conserves the redox energy in a proton gradient. Cyanobacterial NDH-1 also plays a role in inorganic carbon-concentration. The chain is NAD(P)H-quinone oxidoreductase subunit J from Synechococcus sp. (strain RCC307).